The chain runs to 523 residues: Sialate O-acetylesterase (523 aa).

Residues 1–23 (MVAPGLVLGLVLPLILWADRSAG) form the signal peptide. Residues N107, N138, N267, N290, N401, and N422 are each glycosylated (N-linked (GlcNAc...) asparagine).

As to expression, widely expressed with high expression in the testis, prostate, and colon.

It localises to the lysosome. It is found in the cytoplasm. The catalysed reaction is N-acetyl-9-O-acetylneuraminate + H2O = N-acetylneuraminate + acetate + H(+). The enzyme catalyses an Ac-O-9-sialoglycoconjugate + H2O = a sialoglycoconjugate + acetate + H(+). Functionally, catalyzes the removal of O-acetyl ester groups from position 9 of the free diacetylated sialate N-acetyl-9-O-acetylneuraminate (Neu5,9Ac2) in the cytosol and of the diacetylated sialate residues of sialylglycoconjugates in the lysosomes. Together with the sialate-O-acetyltransferase they regulate the balance of acetylated sialoglycoconjugates, key players in various processes such as cell-cell interactions, host-pathogen recognition, and tumor antigenicity. This chain is Sialate O-acetylesterase (SIAE), found in Homo sapiens (Human).